We begin with the raw amino-acid sequence, 289 residues long: MEWSLTQNKLLAFHRLMRTDKPIGALLLLWPTLWALWVATPGVPQLWILAVFVAGVWLMRAAGCVVNDYADRKFDGHVKRTANRPLPSGAVTEKEARTLFVVLVALSFLLVLTLNTMTILLSIAALALAWVYPFMKRYTHLPQVVLGAAFGWSIPMAFAAVSESVPLSCWLMFLANILWAVAYDTQYAMVDRDDDLKIGIKSTAILFGRHDKLIIGILQIAVLALMALIGWLNGLGWGYYWSVLVAGALFVYQQKLIVGREREACFKAFMNNNYVGLVLFLGLAMSYVG.

8 helical membrane passes run 23–43 (IGALLLLWPTLWALWVATPGV), 46–66 (LWILAVFVAGVWLMRAAGCVV), 99–119 (LFVVLVALSFLLVLTLNTMTI), 141–161 (LPQVVLGAAFGWSIPMAFAAV), 163–183 (ESVPLSCWLMFLANILWAVAY), 213–233 (LIIGILQIAVLALMALIGWLN), 234–254 (GLGWGYYWSVLVAGALFVYQQ), and 268–288 (AFMNNNYVGLVLFLGLAMSYV).

Belongs to the UbiA prenyltransferase family. It depends on Mg(2+) as a cofactor.

It is found in the cell inner membrane. The enzyme catalyses all-trans-octaprenyl diphosphate + 4-hydroxybenzoate = 4-hydroxy-3-(all-trans-octaprenyl)benzoate + diphosphate. The protein operates within cofactor biosynthesis; ubiquinone biosynthesis. Its function is as follows. Catalyzes the prenylation of para-hydroxybenzoate (PHB) with an all-trans polyprenyl group. Mediates the second step in the final reaction sequence of ubiquinone-8 (UQ-8) biosynthesis, which is the condensation of the polyisoprenoid side chain with PHB, generating the first membrane-bound Q intermediate 3-octaprenyl-4-hydroxybenzoate. The sequence is that of 4-hydroxybenzoate octaprenyltransferase from Citrobacter koseri (strain ATCC BAA-895 / CDC 4225-83 / SGSC4696).